Here is a 463-residue protein sequence, read N- to C-terminus: L-2-hydroxyglutarate dehydrogenase, mitochondrial (463 aa).

The transit peptide at 1-52 (MVPALRYLGSVCGRARGIFPGGFSAAHTPASGKSRLLCQGGRRASTSSFDIV) directs the protein to the mitochondrion. An N6-acetyllysine mark is found at Lys-104 and Lys-173.

This sequence belongs to the L2HGDH family. The cofactor is FAD.

It localises to the mitochondrion. It carries out the reaction (S)-2-hydroxyglutarate + A = 2-oxoglutarate + AH2. The protein is L-2-hydroxyglutarate dehydrogenase, mitochondrial (L2HGDH) of Bos taurus (Bovine).